A 465-amino-acid polypeptide reads, in one-letter code: UDP-N-acetylmuramate--L-alanine ligase (465 aa).

112–118 (GTHGKTT) provides a ligand contact to ATP.

The protein belongs to the MurCDEF family.

The protein resides in the cytoplasm. The catalysed reaction is UDP-N-acetyl-alpha-D-muramate + L-alanine + ATP = UDP-N-acetyl-alpha-D-muramoyl-L-alanine + ADP + phosphate + H(+). The protein operates within cell wall biogenesis; peptidoglycan biosynthesis. Cell wall formation. This chain is UDP-N-acetylmuramate--L-alanine ligase, found in Burkholderia ambifaria (strain ATCC BAA-244 / DSM 16087 / CCUG 44356 / LMG 19182 / AMMD) (Burkholderia cepacia (strain AMMD)).